The chain runs to 213 residues: Imidazole glycerol phosphate synthase subunit HisH 1 (213 aa).

The Glutamine amidotransferase type-1 domain occupies 3 to 213 (SVSILDYGVG…LSIIQQFLQI (211 aa)). The active-site Nucleophile is cysteine 81. Catalysis depends on residues histidine 195 and glutamate 197.

As to quaternary structure, heterodimer of HisH and HisF.

The protein localises to the cytoplasm. The enzyme catalyses 5-[(5-phospho-1-deoxy-D-ribulos-1-ylimino)methylamino]-1-(5-phospho-beta-D-ribosyl)imidazole-4-carboxamide + L-glutamine = D-erythro-1-(imidazol-4-yl)glycerol 3-phosphate + 5-amino-1-(5-phospho-beta-D-ribosyl)imidazole-4-carboxamide + L-glutamate + H(+). It catalyses the reaction L-glutamine + H2O = L-glutamate + NH4(+). Its pathway is amino-acid biosynthesis; L-histidine biosynthesis; L-histidine from 5-phospho-alpha-D-ribose 1-diphosphate: step 5/9. Functionally, IGPS catalyzes the conversion of PRFAR and glutamine to IGP, AICAR and glutamate. The HisH subunit provides the glutamine amidotransferase activity that produces the ammonia necessary to HisF for the synthesis of IGP and AICAR. The protein is Imidazole glycerol phosphate synthase subunit HisH 1 of Legionella pneumophila (strain Lens).